Reading from the N-terminus, the 218-residue chain is MDLINIALDGPAAAGKSTIARQVASKLSMIYVDTGAMYRAITYKYLQNDKPEDFKTLVNQTTLELTYDKSKGQRILLDNQDVTDFLRENDVTQNVSYVASKEPVRTFAVEKQKDLAAKKGIVMDGRDIGTVVLPDAELKVFMIASVEERAERRQKENEQRGIPSTLSQLKKEIEERDHYDMNRDISPLKKADDAVTVDTTGKTIEEVTEEIMTLVNNI.

10-18 (GPAAAGKST) contacts ATP.

It belongs to the cytidylate kinase family. Type 1 subfamily.

The protein resides in the cytoplasm. It catalyses the reaction CMP + ATP = CDP + ADP. The catalysed reaction is dCMP + ATP = dCDP + ADP. In Staphylococcus haemolyticus (strain JCSC1435), this protein is Cytidylate kinase.